We begin with the raw amino-acid sequence, 118 residues long: Ribosome-binding factor A (118 aa).

Belongs to the RbfA family. As to quaternary structure, monomer. Binds 30S ribosomal subunits, but not 50S ribosomal subunits or 70S ribosomes.

Its subcellular location is the cytoplasm. Functionally, one of several proteins that assist in the late maturation steps of the functional core of the 30S ribosomal subunit. Associates with free 30S ribosomal subunits (but not with 30S subunits that are part of 70S ribosomes or polysomes). Required for efficient processing of 16S rRNA. May interact with the 5'-terminal helix region of 16S rRNA. The protein is Ribosome-binding factor A of Geobacter metallireducens (strain ATCC 53774 / DSM 7210 / GS-15).